The following is a 294-amino-acid chain: Pyridoxal 5'-phosphate synthase subunit PdxS (294 aa).

Asp-24 serves as a coordination point for D-ribose 5-phosphate. Lys-81 (schiff-base intermediate with D-ribose 5-phosphate) is an active-site residue. A D-ribose 5-phosphate-binding site is contributed by Gly-153. Arg-165 is a binding site for D-glyceraldehyde 3-phosphate. Residues Gly-214 and 235-236 (GS) each bind D-ribose 5-phosphate.

The protein belongs to the PdxS/SNZ family. In the presence of PdxT, forms a dodecamer of heterodimers.

The catalysed reaction is aldehydo-D-ribose 5-phosphate + D-glyceraldehyde 3-phosphate + L-glutamine = pyridoxal 5'-phosphate + L-glutamate + phosphate + 3 H2O + H(+). Its pathway is cofactor biosynthesis; pyridoxal 5'-phosphate biosynthesis. In terms of biological role, catalyzes the formation of pyridoxal 5'-phosphate from ribose 5-phosphate (RBP), glyceraldehyde 3-phosphate (G3P) and ammonia. The ammonia is provided by the PdxT subunit. Can also use ribulose 5-phosphate and dihydroxyacetone phosphate as substrates, resulting from enzyme-catalyzed isomerization of RBP and G3P, respectively. The protein is Pyridoxal 5'-phosphate synthase subunit PdxS of Bacillus pumilus (strain SAFR-032).